Here is a 236-residue protein sequence, read N- to C-terminus: C-&gt;U-editing enzyme APOBEC-1 (236 aa).

The CMP/dCMP-type deaminase domain occupies 10–134 (GDPTLRRRIE…QQNRQGLRDL (125 aa)). Histidine 61 contacts Zn(2+). Glutamate 63 serves as the catalytic Proton donor. Zn(2+)-binding residues include cysteine 93 and cysteine 96.

The protein belongs to the cytidine and deoxycytidylate deaminase family. As to quaternary structure, homodimer. Interacts with A1CF; form an mRNA editing complex. Interacts with RBM47; form an mRNA editing complex. Found in a complex with CELF2/CUGBP2 and A1CF. Interacts with HNRPAB. Interacts with SYNCRIP. Requires Zn(2+) as cofactor. Expressed exclusively in the small intestine.

It localises to the cytoplasm. It is found in the nucleus. It carries out the reaction a cytidine in mRNA + H2O + H(+) = a uridine in mRNA + NH4(+). The enzyme catalyses cytidine(6666) in apoB mRNA + H2O + H(+) = uridine(6666) in apoB mRNA + NH4(+). In terms of biological role, cytidine deaminase catalyzing the cytidine to uridine postranscriptional editing of a variety of mRNAs. Form complexes with cofactors that confer differential editing activity and selectivity. Responsible for the postranscriptional editing of a CAA codon for Gln to a UAA codon for stop in the apolipoprotein B mRNA. Also involved in CGA (Arg) to UGA (Stop) editing in the NF1 mRNA. May also play a role in the epigenetic regulation of gene expression by participating in DNA demethylation. The protein is C-&gt;U-editing enzyme APOBEC-1 of Homo sapiens (Human).